Consider the following 144-residue polypeptide: Putative lipoprotein MAH_0816 (144 aa).

The N-terminal stretch at 1–24 is a signal peptide; it reads MRWPMQNRTTAVIAVALATTALVA. Cys25 is lipidated: N-palmitoyl cysteine. Cys25 carries S-diacylglycerol cysteine lipidation.

Belongs to the mycobacterial 19 kDa antigen family.

Its subcellular location is the cell membrane. This Mycobacterium avium subsp. hominissuis (strain TH135) protein is Putative lipoprotein MAH_0816.